Here is a 115-residue protein sequence, read N- to C-terminus: UPF0145 protein lp_2083 (115 aa).

Belongs to the UPF0145 family.

The chain is UPF0145 protein lp_2083 from Lactiplantibacillus plantarum (strain ATCC BAA-793 / NCIMB 8826 / WCFS1) (Lactobacillus plantarum).